Here is a 212-residue protein sequence, read N- to C-terminus: Membrane-bound lytic murein transglycosylase E (212 aa).

This sequence belongs to the transglycosylase Slt family.

The catalysed reaction is Exolytic cleavage of the (1-&gt;4)-beta-glycosidic linkage between N-acetylmuramic acid (MurNAc) and N-acetylglucosamine (GlcNAc) residues in peptidoglycan, from either the reducing or the non-reducing ends of the peptidoglycan chains, with concomitant formation of a 1,6-anhydrobond in the MurNAc residue.. Murein-degrading enzyme. May play a role in recycling of muropeptides during cell elongation and/or cell division. In Buchnera aphidicola subsp. Baizongia pistaciae (strain Bp), this protein is Membrane-bound lytic murein transglycosylase E (mltE).